A 408-amino-acid chain; its full sequence is Glutamate N-acetyltransferase (408 aa).

Substrate contacts are provided by Thr-150, Lys-176, Thr-189, Glu-271, Asn-403, and Thr-408. Thr-189 serves as the catalytic Nucleophile.

Belongs to the ArgJ family. In terms of assembly, heterotetramer of two alpha and two beta chains.

It is found in the cytoplasm. It catalyses the reaction N(2)-acetyl-L-ornithine + L-glutamate = N-acetyl-L-glutamate + L-ornithine. The protein operates within amino-acid biosynthesis; L-arginine biosynthesis; L-ornithine and N-acetyl-L-glutamate from L-glutamate and N(2)-acetyl-L-ornithine (cyclic): step 1/1. Functionally, catalyzes the transfer of the acetyl group from N(2)-acetylornithine to glutamate, forming N-acetylglutamate and L-ornithine. In Methanococcus maripaludis (strain C6 / ATCC BAA-1332), this protein is Glutamate N-acetyltransferase.